A 385-amino-acid chain; its full sequence is Acetate kinase (385 aa).

N8 is a binding site for Mg(2+). K15 contributes to the ATP binding site. R85 lines the substrate pocket. The active-site Proton donor/acceptor is the D142. ATP-binding positions include 200 to 204, 275 to 277, and 323 to 327; these read HLGNG, DMR, and GIGEN. E373 contacts Mg(2+).

This sequence belongs to the acetokinase family. As to quaternary structure, homodimer. Mg(2+) serves as cofactor. It depends on Mn(2+) as a cofactor.

Its subcellular location is the cytoplasm. The enzyme catalyses acetate + ATP = acetyl phosphate + ADP. The protein operates within metabolic intermediate biosynthesis; acetyl-CoA biosynthesis; acetyl-CoA from acetate: step 1/2. Catalyzes the formation of acetyl phosphate from acetate and ATP. Can also catalyze the reverse reaction. This chain is Acetate kinase, found in Francisella tularensis subsp. holarctica (strain OSU18).